We begin with the raw amino-acid sequence, 138 residues long: Small ribosomal subunit protein bS6 (138 aa).

Residues 94–138 (VKQDGPLPTPKPTSKENEPEKEEVKPTEEKTESPSKDEKKEDSKE) are disordered. Positions 106 to 138 (TSKENEPEKEEVKPTEEKTESPSKDEKKEDSKE) are enriched in basic and acidic residues.

It belongs to the bacterial ribosomal protein bS6 family.

Its function is as follows. Binds together with bS18 to 16S ribosomal RNA. The chain is Small ribosomal subunit protein bS6 from Prochlorococcus marinus (strain NATL2A).